The sequence spans 1027 residues: Kinesin heavy chain isoform 5A (1027 aa).

Ala-2 is modified (N-acetylalanine). Positions 9–327 constitute a Kinesin motor domain; the sequence is SIKVLCRFRP…LMFGQRAKTI (319 aa). An ATP-binding site is contributed by 86–93; the sequence is GQTSSGKT. A microtubule-binding region spans residues 174–315; sequence VSSPEEILDV…PSSYNDAETK (142 aa). Residues 271–361 are necessary for interaction with ZFYVE27; the sequence is EGTKSYVPYR…KTKAQKETIA (91 aa). Residues 331–906 adopt a coiled-coil conformation; the sequence is ASVNLELTAE…VDRIKEAVRY (576 aa). Residues 353–1027 are interaction with BICD2; sequence TKAQKETIAK…FPLHQETAAS (675 aa). Thr-397 is modified (phosphothreonine). Residues 906 to 937 are disordered; that stretch reads YKSSGKRGHSAQIAKPVRPGHYPASSPTNPYG. A globular region spans residues 907–1027; it reads KSSGKRGHSA…FPLHQETAAS (121 aa).

It belongs to the TRAFAC class myosin-kinesin ATPase superfamily. Kinesin family. Kinesin subfamily. Oligomer composed of two heavy chains and two light chains. Interacts with GRIP1. Interacts with FMR1 (via C-terminus); this interaction is increased in a mGluR-dependent manner. Interacts with BORCS5. Interacts with ZFYVE27. Interacts with VAPA, VAPB, SURF4, RAB11A (GDP-bound form), RAB11B (GDP-bound form) and RTN3 in a ZFYVE27-dependent manner. Interacts with BICD2. Interacts with DTNB.

The protein resides in the cytoplasm. The protein localises to the perinuclear region. It localises to the cytoskeleton. It is found in the perikaryon. It carries out the reaction ATP + H2O + a kinesin associated with a microtubule at position (n) = ADP + phosphate a kinesin associated with a microtubule at position (n+1, toward the plus end).. Its function is as follows. Microtubule-dependent motor required for slow axonal transport of neurofilament proteins (NFH, NFM and NFL). Can induce formation of neurite-like membrane protrusions in non-neuronal cells in a ZFYVE27-dependent manner. The ZFYVE27-KIF5A complex contributes to the vesicular transport of VAPA, VAPB, SURF4, RAB11A, RAB11B and RTN3 proteins in neurons. Required for anterograde axonal transportation of MAPK8IP3/JIP3 which is essential for MAPK8IP3/JIP3 function in axon elongation. This chain is Kinesin heavy chain isoform 5A (Kif5a), found in Mus musculus (Mouse).